The sequence spans 486 residues: Malonate-semialdehyde dehydrogenase 2 (486 aa).

5 residues coordinate NAD(+): Phe-154, Lys-178, Glu-181, Arg-182, and Ser-231. The Nucleophile role is filled by Cys-286. Residue Glu-385 participates in NAD(+) binding.

It belongs to the aldehyde dehydrogenase family. IolA subfamily. As to quaternary structure, homotetramer.

The enzyme catalyses 3-oxopropanoate + NAD(+) + CoA + H2O = hydrogencarbonate + acetyl-CoA + NADH + H(+). It catalyses the reaction 2-methyl-3-oxopropanoate + NAD(+) + CoA + H2O = propanoyl-CoA + hydrogencarbonate + NADH + H(+). Its pathway is polyol metabolism; myo-inositol degradation into acetyl-CoA; acetyl-CoA from myo-inositol: step 7/7. In terms of biological role, catalyzes the oxidation of malonate semialdehyde (MSA) and methylmalonate semialdehyde (MMSA) into acetyl-CoA and propanoyl-CoA, respectively. Is involved in a myo-inositol catabolic pathway. Bicarbonate, and not CO2, is the end-product of the enzymatic reaction. This Shouchella clausii (strain KSM-K16) (Alkalihalobacillus clausii) protein is Malonate-semialdehyde dehydrogenase 2.